The chain runs to 190 residues: Ribosome maturation factor RimM (190 aa).

One can recognise a PRC barrel domain in the interval 95-171 (DPDEFYDHEL…VVMIEPPEGL (77 aa)). Residues 169–190 (EGLLDPDFGDKSNSDNSNSDND) form a disordered region.

This sequence belongs to the RimM family. Binds ribosomal protein uS19.

It is found in the cytoplasm. In terms of biological role, an accessory protein needed during the final step in the assembly of 30S ribosomal subunit, possibly for assembly of the head region. Essential for efficient processing of 16S rRNA. May be needed both before and after RbfA during the maturation of 16S rRNA. It has affinity for free ribosomal 30S subunits but not for 70S ribosomes. This is Ribosome maturation factor RimM from Rhodococcus erythropolis (strain PR4 / NBRC 100887).